A 323-amino-acid polypeptide reads, in one-letter code: uncharacterized protein (323 aa).

A TIR domain is found at 1–142 (MPSVFFSYSH…QVAKAVREAA (142 aa)).

This is an uncharacterized protein from Sinorhizobium fredii (strain NBRC 101917 / NGR234).